The chain runs to 324 residues: Mating-type protein A-3 (324 aa).

The segment at residues 147–215 (TSRPRNQFVL…RHRAENPHLY (69 aa)) is a DNA-binding region (HMG box).

The protein localises to the nucleus. In terms of biological role, required, together with mating-type protein A-2, for efficient ascospore formation. The polypeptide is Mating-type protein A-3 (mtA-3) (Neurospora crassa (strain ATCC 24698 / 74-OR23-1A / CBS 708.71 / DSM 1257 / FGSC 987)).